A 392-amino-acid polypeptide reads, in one-letter code: 3-ketoacyl-CoA thiolase (392 aa).

Cys95 acts as the Acyl-thioester intermediate in catalysis. Catalysis depends on proton acceptor residues His347 and Cys377.

This sequence belongs to the thiolase-like superfamily. Thiolase family. As to quaternary structure, heterotetramer of two alpha chains (FadB) and two beta chains (FadA).

It localises to the cytoplasm. It carries out the reaction an acyl-CoA + acetyl-CoA = a 3-oxoacyl-CoA + CoA. It functions in the pathway lipid metabolism; fatty acid beta-oxidation. Its function is as follows. Catalyzes the final step of fatty acid oxidation in which acetyl-CoA is released and the CoA ester of a fatty acid two carbons shorter is formed. The polypeptide is 3-ketoacyl-CoA thiolase (Chromohalobacter salexigens (strain ATCC BAA-138 / DSM 3043 / CIP 106854 / NCIMB 13768 / 1H11)).